The chain runs to 771 residues: 5-methyltetrahydropteroyltriglutamate--homocysteine methyltransferase (771 aa).

Residues 13–16 (RELK) and Lys-128 each bind 5-methyltetrahydropteroyltri-L-glutamate. L-homocysteine-binding positions include 451 to 453 (IGS) and Glu-504. L-methionine contacts are provided by residues 451–453 (IGS) and Glu-504. 5-methyltetrahydropteroyltri-L-glutamate is bound by residues 535–536 (RC) and Trp-581. Asp-619 is an L-homocysteine binding site. Asp-619 is an L-methionine binding site. A 5-methyltetrahydropteroyltri-L-glutamate-binding site is contributed by Glu-625. 3 residues coordinate Zn(2+): His-661, Cys-663, and Glu-685. Residue His-714 is the Proton donor of the active site. Cys-746 is a Zn(2+) binding site.

It belongs to the vitamin-B12 independent methionine synthase family. Requires Zn(2+) as cofactor.

The catalysed reaction is 5-methyltetrahydropteroyltri-L-glutamate + L-homocysteine = tetrahydropteroyltri-L-glutamate + L-methionine. Its pathway is amino-acid biosynthesis; L-methionine biosynthesis via de novo pathway; L-methionine from L-homocysteine (MetE route): step 1/1. In terms of biological role, catalyzes the transfer of a methyl group from 5-methyltetrahydrofolate to homocysteine resulting in methionine formation. This chain is 5-methyltetrahydropteroyltriglutamate--homocysteine methyltransferase, found in Nitrobacter winogradskyi (strain ATCC 25391 / DSM 10237 / CIP 104748 / NCIMB 11846 / Nb-255).